The primary structure comprises 230 residues: Ribonuclease 3 (230 aa).

Residues 10–133 enclose the RNase III domain; the sequence is DPRLLSRIGY…IIGAIYLDSG (124 aa). Position 46 (E46) interacts with Mg(2+). D50 is a catalytic residue. Mg(2+) is bound by residues D119 and E122. The active site involves E122. The DRBM domain maps to 161–230; the sequence is DPKSRLQEYL…AAEILKLLEQ (70 aa).

This sequence belongs to the ribonuclease III family. In terms of assembly, homodimer. Mg(2+) is required as a cofactor.

Its subcellular location is the cytoplasm. It carries out the reaction Endonucleolytic cleavage to 5'-phosphomonoester.. Functionally, digests double-stranded RNA. Involved in the processing of primary rRNA transcript to yield the immediate precursors to the large and small rRNAs (23S and 16S). Processes some mRNAs, and tRNAs when they are encoded in the rRNA operon. Processes pre-crRNA and tracrRNA of type II CRISPR loci if present in the organism. The polypeptide is Ribonuclease 3 (rnc) (Acinetobacter pittii (strain PHEA-2)).